We begin with the raw amino-acid sequence, 280 residues long: DegV domain-containing protein Mb2440c (280 aa).

The DegV domain maps to 3-274 (VVVVTDTSCR…AGAVGVCVDV (272 aa)). A hexadecanoate-binding site is contributed by Ser89.

In terms of biological role, may bind long-chain fatty acids, such as palmitate, and may play a role in lipid transport or fatty acid metabolism. In Mycobacterium bovis (strain ATCC BAA-935 / AF2122/97), this protein is DegV domain-containing protein Mb2440c.